Here is a 473-residue protein sequence, read N- to C-terminus: Photosystem II CP43 reaction center protein (473 aa).

The propeptide occupies 1 to 14 (MKTLYSRRRFYHVE). Threonine 15 is modified (N-acetylthreonine). Threonine 15 carries the post-translational modification Phosphothreonine. The next 5 helical transmembrane spans lie at 69–93 (LFEV…PHLA), 134–155 (LLGP…KDRN), 178–200 (KALY…RKIT), 255–275 (KPFA…LSYS), and 291–312 (WFNN…ASQA). Glutamate 367 serves as a coordination point for [CaMn4O5] cluster. Residues 447 to 471 (RARAAAAGFEKGIDRDFEPVLSMTP) form a helical membrane-spanning segment.

This sequence belongs to the PsbB/PsbC family. PsbC subfamily. PSII is composed of 1 copy each of membrane proteins PsbA, PsbB, PsbC, PsbD, PsbE, PsbF, PsbH, PsbI, PsbJ, PsbK, PsbL, PsbM, PsbT, PsbX, PsbY, PsbZ, Psb30/Ycf12, at least 3 peripheral proteins of the oxygen-evolving complex and a large number of cofactors. It forms dimeric complexes. Binds multiple chlorophylls and provides some of the ligands for the Ca-4Mn-5O cluster of the oxygen-evolving complex. It may also provide a ligand for a Cl- that is required for oxygen evolution. PSII binds additional chlorophylls, carotenoids and specific lipids. is required as a cofactor.

It is found in the plastid. It localises to the chloroplast thylakoid membrane. Its function is as follows. One of the components of the core complex of photosystem II (PSII). It binds chlorophyll and helps catalyze the primary light-induced photochemical processes of PSII. PSII is a light-driven water:plastoquinone oxidoreductase, using light energy to abstract electrons from H(2)O, generating O(2) and a proton gradient subsequently used for ATP formation. The sequence is that of Photosystem II CP43 reaction center protein from Solanum bulbocastanum (Wild potato).